Reading from the N-terminus, the 95-residue chain is Protein TusB (95 aa).

Belongs to the DsrH/TusB family. In terms of assembly, heterohexamer, formed by a dimer of trimers. The hexameric TusBCD complex contains 2 copies each of TusB, TusC and TusD. The TusBCD complex interacts with TusE.

It is found in the cytoplasm. Functionally, part of a sulfur-relay system required for 2-thiolation of 5-methylaminomethyl-2-thiouridine (mnm(5)s(2)U) at tRNA wobble positions. This is Protein TusB from Pectobacterium parmentieri.